The primary structure comprises 420 residues: MTLLAVNGGSPIRSQQWPLWPAPAPGALDALNEVLHSGRWAISGPYQGKQSFERRFAAAFAEFHEIGHCVPTSSGTASLMVALEACGVGAGDEVIIPGLTWVANASTVAGVNAVPVPVDVDPQTLCLDPAAVERAITPRTAAIVVVHLYSAVADLDALTAIAERHEIPLIEDCAQAHGARYRDRRVGTFGAFGTFSMQHSKVLTSGEGGAVITGDAALSRRAEHLRADGRTYTPDEPAVGEMELAQTAELMGSNRCLSEFQAALLLGQLELLDEQNERRRANAALLDEGLGALGIQPQVSSPGTTERTYYEWAGRIEDDGIGQIGVERIAPAVAAELSGAAIYASYPPMNHNRLYQPATRARFKGIAGLDLTGYSLPVAEDAGQRVVTIHHSALLGDESDMKDIVRAFEKVFANHRELRG.

An N6-(pyridoxal phosphate)lysine modification is found at Lys-201.

This sequence belongs to the DegT/DnrJ/EryC1 family. L-glutamine:2-deoxy-scyllo-inosose/scyllo-inosose aminotransferase subfamily. Pyridoxal 5'-phosphate is required as a cofactor.

It carries out the reaction 2-deoxy-L-scyllo-inosose + L-glutamine = 2-deoxy-scyllo-inosamine + 2-oxoglutaramate. The catalysed reaction is 3-amino-2,3-dideoxy-scyllo-inosose + L-glutamine = 2-deoxystreptamine + 2-oxoglutaramate. The protein operates within metabolic intermediate biosynthesis; 2-deoxystreptamine biosynthesis; 2-deoxystreptamine from D-glucose 6-phosphate: step 2/4. Its pathway is antibiotic biosynthesis; gentamicin biosynthesis. In terms of biological role, catalyzes the PLP-dependent transamination of 2-deoxy-scyllo-inosose (2-DOI) to form 2-deoxy-scyllo-inosamine (2-DOIA) using L-glutamine as the amino donor. Also catalyzes the transamination of 3-amino-2,3-dideoxy-scyllo-inosose (keto-2-DOIA) into 2-deoxystreptamine (2-DOS). The polypeptide is L-glutamine:2-deoxy-scyllo-inosose aminotransferase (gntA) (Micromonospora echinospora (Micromonospora purpurea)).